The chain runs to 90 residues: uncharacterized protein (90 aa).

The N-terminal stretch at M1–A26 is a signal peptide.

This is an uncharacterized protein from Bacillus subtilis (strain 168).